A 288-amino-acid polypeptide reads, in one-letter code: Ankyrin repeat and SOCS box protein 8 (288 aa).

Ser17 carries the phosphoserine modification. 4 ANK repeats span residues 52–81, 85–113, 117–146, and 150–179; these read GTLK…EVNA, YNRT…NPNA, NRDT…SVNA, and NNDT…EVRV. The SOCS box domain occupies 235 to 288; sequence QLCEKLTVLCSAPGTLKTLARYTVRRSLGLQYLPDAVKGLPLPASLKEYLLLLE.

The protein belongs to the ankyrin SOCS box (ASB) family. Interacts with TBK1; this interaction promotes TBK1 proteasomal degradation. In terms of processing, phosphorylated by TBK1.

The protein resides in the cytoplasm. It functions in the pathway protein modification; protein ubiquitination. Its function is as follows. May be a substrate-recognition component of a SCF-like ECS (Elongin-Cullin-SOCS-box protein) E3 ubiquitin-protein ligase complex which mediates the ubiquitination and subsequent proteasomal degradation of target proteins. Inhibits IFN-beta production through the IRF3 signaling pathway by targeting TBK1 via 'Lys-48'-linked ubiquitination, leading to its proteasomal degradation. This chain is Ankyrin repeat and SOCS box protein 8 (ASB8), found in Pongo abelii (Sumatran orangutan).